Here is a 364-residue protein sequence, read N- to C-terminus: Aminomethyltransferase (364 aa).

This sequence belongs to the GcvT family. In terms of assembly, the glycine cleavage system is composed of four proteins: P, T, L and H.

The enzyme catalyses N(6)-[(R)-S(8)-aminomethyldihydrolipoyl]-L-lysyl-[protein] + (6S)-5,6,7,8-tetrahydrofolate = N(6)-[(R)-dihydrolipoyl]-L-lysyl-[protein] + (6R)-5,10-methylene-5,6,7,8-tetrahydrofolate + NH4(+). Its function is as follows. The glycine cleavage system catalyzes the degradation of glycine. The chain is Aminomethyltransferase from Enterobacter sp. (strain 638).